Reading from the N-terminus, the 225-residue chain is Transcription factor HES-7 (225 aa).

The region spanning 12–69 (GPKMLKPLVEKRRRDRINRSLEELRLLLLERTRDQNLRNPKLEKAEILEFAVGYLRER) is the bHLH domain. The Orange domain occupies 92 to 122 (YLSGFRECLLRLAAFAHDASPAARSQLFSAL). The segment at 124 to 225 (GYRRPKPPRP…PPPAFWRPWP (102 aa)) is disordered. 2 stretches are compositionally biased toward pro residues: residues 140-149 (LPAPRPPLDP) and 213-225 (PSLP…RPWP). The WRPW motif motif lies at 221–224 (WRPW).

Transcription repression requires formation of a complex with a corepressor protein of the Groucho/TLE family.

Its subcellular location is the nucleus. Transcriptional repressor. Represses transcription from both N box- and E box-containing promoters. May with HES1, cooperatively regulate somite formation in the presomitic mesoderm (PSM). May function as a segmentation clock, which is essential for coordinated somite segmentation. In Mus musculus (Mouse), this protein is Transcription factor HES-7 (Hes7).